A 138-amino-acid chain; its full sequence is Basic phospholipase A2 homolog Tbo-K49 (138 aa).

Residues 1-16 (MRTLWIMAVLLVGVEG) form the signal peptide. 6 cysteine pairs are disulfide-bonded: cysteine 42–cysteine 131, cysteine 44–cysteine 60, cysteine 59–cysteine 111, cysteine 65–cysteine 138, cysteine 66–cysteine 104, and cysteine 91–cysteine 102. Positions 121 to 133 (KKERINTKIFCKK) are important for membrane-damaging activities in eukaryotes and bacteria; heparin-binding.

As to quaternary structure, monomer. As to expression, expressed by the venom gland.

It is found in the secreted. Functionally, snake venom phospholipase A2 homolog that lacks catalytic activity. It induces local edema. Is myotoxic. A model of myotoxic mechanism has been proposed: an apo Lys49-PLA2 is activated by the entrance of a hydrophobic molecule (e.g. fatty acid) at the hydrophobic channel of the protein leading to a reorientation of a monomer. This reorientation causes a transition between 'inactive' to 'active' states, causing alignment of C-terminal and membrane-docking sites (MDoS) side-by-side and putting the membrane-disruption sites (MDiS) in the same plane, exposed to solvent and in a symmetric position for both monomers. The MDoS region stabilizes the toxin on membrane by the interaction of charged residues with phospholipid head groups. Subsequently, the MDiS region destabilizes the membrane with penetration of hydrophobic residues. This insertion causes a disorganization of the membrane, allowing an uncontrolled influx of ions (i.e. calcium and sodium), and eventually triggering irreversible intracellular alterations and cell death. The sequence is that of Basic phospholipase A2 homolog Tbo-K49 from Craspedocephalus borneensis (Borneo pit viper).